The following is a 184-amino-acid chain: dCTP deaminase (184 aa).

DCTP-binding positions include 107-112 (KSTYAR), 131-133 (TLE), Gln152, Tyr166, and Gln176. Glu133 serves as the catalytic Proton donor/acceptor.

It belongs to the dCTP deaminase family. As to quaternary structure, homotrimer.

It carries out the reaction dCTP + H2O + H(+) = dUTP + NH4(+). It functions in the pathway pyrimidine metabolism; dUMP biosynthesis; dUMP from dCTP (dUTP route): step 1/2. Functionally, catalyzes the deamination of dCTP to dUTP. In Gemmatimonas aurantiaca (strain DSM 14586 / JCM 11422 / NBRC 100505 / T-27), this protein is dCTP deaminase.